Reading from the N-terminus, the 176-residue chain is Peptide deformylase (176 aa).

Fe cation is bound by residues cysteine 94 and histidine 136. The active site involves glutamate 137. Histidine 140 contributes to the Fe cation binding site.

It belongs to the polypeptide deformylase family. It depends on Fe(2+) as a cofactor.

It catalyses the reaction N-terminal N-formyl-L-methionyl-[peptide] + H2O = N-terminal L-methionyl-[peptide] + formate. Removes the formyl group from the N-terminal Met of newly synthesized proteins. Requires at least a dipeptide for an efficient rate of reaction. N-terminal L-methionine is a prerequisite for activity but the enzyme has broad specificity at other positions. In Mesorhizobium japonicum (strain LMG 29417 / CECT 9101 / MAFF 303099) (Mesorhizobium loti (strain MAFF 303099)), this protein is Peptide deformylase.